Here is a 1116-residue protein sequence, read N- to C-terminus: Surface layer protein (1116 aa).

The signal sequence occupies residues 1–53; that stretch reads MQDSGFKKKDRSTNIPQEQFVYTRGGEHKVMKKVVNSVLASALAITVAPMAFA. SLH domains are found at residues 54–117, 118–181, and 182–231; these read AEDT…KLAQ, FNTT…RGVW, and PNSM…YGTD.

The protein localises to the secreted. It localises to the cell wall. Its subcellular location is the S-layer. The sequence is that of Surface layer protein from Brevibacillus choshinensis.